A 40-amino-acid chain; its full sequence is Photosystem II reaction center protein J (40 aa).

A helical membrane pass occupies residues 10 to 30 (LWLVGTVAGTLVIGLLGVFFY).

The protein belongs to the PsbJ family. PSII is composed of 1 copy each of membrane proteins PsbA, PsbB, PsbC, PsbD, PsbE, PsbF, PsbH, PsbI, PsbJ, PsbK, PsbL, PsbM, PsbT, PsbX, PsbY, PsbZ, Psb30/Ycf12, at least 3 peripheral proteins of the oxygen-evolving complex and a large number of cofactors. It forms dimeric complexes.

The protein resides in the plastid. The protein localises to the chloroplast thylakoid membrane. One of the components of the core complex of photosystem II (PSII). PSII is a light-driven water:plastoquinone oxidoreductase that uses light energy to abstract electrons from H(2)O, generating O(2) and a proton gradient subsequently used for ATP formation. It consists of a core antenna complex that captures photons, and an electron transfer chain that converts photonic excitation into a charge separation. In Adiantum capillus-veneris (Maidenhair fern), this protein is Photosystem II reaction center protein J.